Consider the following 703-residue polypeptide: Fanconi-associated nuclease 1 homolog (703 aa).

Mn(2+)-binding residues include Glu-529, Asp-651, Glu-666, and Val-667. In terms of domain architecture, VRR-NUC spans 597–698 (YIREHQRKTF…EVDVEVCHVS (102 aa)).

The protein belongs to the FAN1 family. Mn(2+) is required as a cofactor. Mg(2+) serves as cofactor.

The protein resides in the nucleus. It catalyses the reaction Hydrolytically removes 5'-nucleotides successively from the 3'-hydroxy termini of 3'-hydroxy-terminated oligonucleotides.. In terms of biological role, nuclease required for the repair of DNA interstrand cross-links (ICL). Acts as a 5'-3' exonuclease that anchors at a cut end of DNA and cleaves DNA successively at every third nucleotide, allowing to excise an ICL from one strand through flanking incisions. In Schizosaccharomyces pombe (strain 972 / ATCC 24843) (Fission yeast), this protein is Fanconi-associated nuclease 1 homolog.